Here is an 83-residue protein sequence, read N- to C-terminus: MKASMYLALAGLVLLFVVGYASESEEKEFPRELLSKIFAVDDFKGEERGCKGFGDSCTPGKNERCPNYACSSKHKWCKVYLGK.

Residues 1–21 (MKASMYLALAGLVLLFVVGYA) form the signal peptide. Positions 22–48 (SESEEKEFPRELLSKIFAVDDFKGEER) are excised as a propeptide. 2 cysteine pairs are disulfide-bonded: Cys-50/Cys-65 and Cys-57/Cys-70. A Leucine amide modification is found at Leu-81.

The protein belongs to the neurotoxin 10 (Hwtx-1) family. 15 (Hntx-3) subfamily. As to quaternary structure, monomer. Expressed by the venom gland.

The protein localises to the secreted. In terms of biological role, lethal neurotoxin. Selectively blocks tetrodotoxin-sensitive voltage-gated sodium channels (Nav). Does not affect tetrodotoxin-resistant voltage-gated sodium channels or calcium channels. This is Mu-theraphotoxin-Hhn2g from Cyriopagopus hainanus (Chinese bird spider).